The chain runs to 202 residues: Complement component C8 gamma chain (202 aa).

Residues methionine 1–alanine 23 form the signal peptide. Residues cysteine 96 and cysteine 188 are joined by a disulfide bond. An N-linked (GlcNAc...) asparagine glycan is attached at asparagine 173.

Belongs to the calycin superfamily. Lipocalin family. As to quaternary structure, heterotrimer of 3 chains: alpha (C8A), beta (C8B) and gamma (C8G); the alpha and gamma chains are disulfide bonded. Component of the membrane attack complex (MAC), composed of complement C5b, C6, C7, C8A, C8B, C8G and multiple copies of the pore-forming subunit C9.

The protein localises to the secreted. Its subcellular location is the target cell membrane. Membrane attack complex (MAC) assembly is inhibited by CD59, thereby protecting self-cells from damage during complement activation. MAC assembly is also inhibited by clusterin (CLU) chaperones that inhibit polymerization of C9. In terms of biological role, component of the membrane attack complex (MAC), a multiprotein complex activated by the complement cascade, which inserts into a target cell membrane and forms a pore, leading to target cell membrane rupture and cell lysis. The MAC is initiated by proteolytic cleavage of C5 into complement C5b in response to the classical, alternative, lectin and GZMK complement pathways. The complement pathways consist in a cascade of proteins that leads to phagocytosis and breakdown of pathogens and signaling that strengthens the adaptive immune system. C8G, together with C8A and C8B, inserts into the target membrane, but does not form pores by itself. During MAC assembly, associates with C5b, C6 and C7 to form the C5b8 intermediate complex that inserts into the target membrane and traverses the bilayer increasing membrane rigidity. This chain is Complement component C8 gamma chain (C8G), found in Oryctolagus cuniculus (Rabbit).